Consider the following 306-residue polypeptide: Lipoyl synthase (306 aa).

Positions 41, 46, 52, 68, 72, 75, and 281 each coordinate [4Fe-4S] cluster. In terms of domain architecture, Radical SAM core spans 54 to 270; the sequence is GARRTATFMI…RKVAMDKGFK (217 aa). Positions 283–306 are disordered; sequence HADEQVNEAAKEKHRLGEEKLQQN.

It belongs to the radical SAM superfamily. Lipoyl synthase family. It depends on [4Fe-4S] cluster as a cofactor.

Its subcellular location is the cytoplasm. It catalyses the reaction [[Fe-S] cluster scaffold protein carrying a second [4Fe-4S](2+) cluster] + N(6)-octanoyl-L-lysyl-[protein] + 2 oxidized [2Fe-2S]-[ferredoxin] + 2 S-adenosyl-L-methionine + 4 H(+) = [[Fe-S] cluster scaffold protein] + N(6)-[(R)-dihydrolipoyl]-L-lysyl-[protein] + 4 Fe(3+) + 2 hydrogen sulfide + 2 5'-deoxyadenosine + 2 L-methionine + 2 reduced [2Fe-2S]-[ferredoxin]. The protein operates within protein modification; protein lipoylation via endogenous pathway; protein N(6)-(lipoyl)lysine from octanoyl-[acyl-carrier-protein]. Its function is as follows. Catalyzes the radical-mediated insertion of two sulfur atoms into the C-6 and C-8 positions of the octanoyl moiety bound to the lipoyl domains of lipoate-dependent enzymes, thereby converting the octanoylated domains into lipoylated derivatives. This chain is Lipoyl synthase, found in Staphylococcus haemolyticus (strain JCSC1435).